A 347-amino-acid polypeptide reads, in one-letter code: Globoside alpha-1,3-N-acetylgalactosaminyltransferase 1 (347 aa).

The Cytoplasmic portion of the chain corresponds to 1–6 (MTRPRL). A helical; Signal-anchor for type II membrane protein transmembrane segment spans residues 7 to 27 (AQGLAFFLLGGTGLWVLWKFI). Residues 28-347 (KDWLLVSYIP…VKKNANWLRT (320 aa)) are Lumenal-facing. Residue Asn108 is glycosylated (N-linked (GlcNAc...) asparagine). Residues 116–121 (FAVGKY), 206–208 (DVD), and 228–231 (HPGY) each bind substrate. The Mn(2+) site is built by Asp206 and Asp208. Glu298 functions as the Nucleophile in the catalytic mechanism.

This sequence belongs to the glycosyltransferase 6 family. Mn(2+) serves as cofactor.

The protein resides in the golgi apparatus membrane. It carries out the reaction a globoside Gb4Cer (d18:1(4E)) + UDP-N-acetyl-alpha-D-galactosamine = a globoside Forssman (d18:1(4E)) + UDP + H(+). The catalysed reaction is a globoside Gb4Cer + UDP-N-acetyl-alpha-D-galactosamine = a globoside IV3GalNAc-Gb4Cer + UDP + H(+). It participates in protein modification; protein glycosylation. Functionally, catalyzes the formation of Forssman glycolipid via the addition of N-acetylgalactosamine (GalNAc) in alpha-1,3-linkage to GalNAcb-1,3Gala-1,4Galb-1,4GlcCer (Gb4Cer). Forssman glycolipid (also called Forssman antigen; FG) probably serves for adherence of some pathogens. Conversely, it diminishes Shiga toxins susceptibility. This Mus musculus (Mouse) protein is Globoside alpha-1,3-N-acetylgalactosaminyltransferase 1.